A 320-amino-acid chain; its full sequence is D-alanine--D-alanine ligase (320 aa).

The ATP-grasp domain occupies 120 to 314 (SSWFFANSIN…FTNLIAEIIK (195 aa)). 147–198 (MKRPYVIKPLTQGSSIGVEVIFEEDDFNFADYDFPYGDQVVIERYIKGREFQ) is a binding site for ATP. Mg(2+)-binding residues include glutamate 267, glutamate 281, and asparagine 283.

It belongs to the D-alanine--D-alanine ligase family. Requires Mg(2+) as cofactor. Mn(2+) serves as cofactor.

It localises to the cytoplasm. It catalyses the reaction 2 D-alanine + ATP = D-alanyl-D-alanine + ADP + phosphate + H(+). It functions in the pathway cell wall biogenesis; peptidoglycan biosynthesis. In terms of biological role, cell wall formation. This Rickettsia akari (strain Hartford) protein is D-alanine--D-alanine ligase.